The sequence spans 279 residues: Shikimate dehydrogenase (NADP(+)) (279 aa).

Residues 14-16 (SIS) and Thr-63 contribute to the shikimate site. The active-site Proton acceptor is Lys-67. NADP(+) is bound at residue Glu-79. Positions 88 and 103 each coordinate shikimate. NADP(+) is bound by residues 127–131 (GAGGA), 151–156 (NRTYEK), and Met-219. Tyr-221 is a binding site for shikimate. Residue Gly-242 participates in NADP(+) binding.

This sequence belongs to the shikimate dehydrogenase family. In terms of assembly, homodimer.

It carries out the reaction shikimate + NADP(+) = 3-dehydroshikimate + NADPH + H(+). Its pathway is metabolic intermediate biosynthesis; chorismate biosynthesis; chorismate from D-erythrose 4-phosphate and phosphoenolpyruvate: step 4/7. In terms of biological role, involved in the biosynthesis of the chorismate, which leads to the biosynthesis of aromatic amino acids. Catalyzes the reversible NADPH linked reduction of 3-dehydroshikimate (DHSA) to yield shikimate (SA). This chain is Shikimate dehydrogenase (NADP(+)), found in Caldicellulosiruptor saccharolyticus (strain ATCC 43494 / DSM 8903 / Tp8T 6331).